Consider the following 469-residue polypeptide: Glutamine synthetase (469 aa).

A GS beta-grasp domain is found at 13-97 (HEVKFVDLRF…IRCDILEPGT (85 aa)). The GS catalytic domain occupies 105 to 469 (PRSIAKRAED…PVEFELYYSV (365 aa)). Mg(2+) is bound by residues Glu-130 and Glu-132. Glu-208 provides a ligand contact to ATP. Mg(2+) is bound by residues Glu-213 and Glu-221. L-glutamate-binding positions include 265-266 (NG) and Gly-266. Position 270 (His-270) interacts with Mg(2+). Residues 272 to 274 (HMS) and Ser-274 contribute to the ATP site. L-glutamate contacts are provided by Arg-322, Glu-328, and Arg-340. ATP is bound by residues Arg-340, Arg-345, and Lys-353. A Mg(2+)-binding site is contributed by Glu-358. Residue Arg-360 coordinates L-glutamate. O-AMP-tyrosine is present on Tyr-398.

Belongs to the glutamine synthetase family. As to quaternary structure, oligomer of 12 subunits arranged in the form of two hexameric ring. It depends on Mg(2+) as a cofactor.

It localises to the cytoplasm. It catalyses the reaction L-glutamate + NH4(+) + ATP = L-glutamine + ADP + phosphate + H(+). With respect to regulation, the activity of this enzyme could be controlled by adenylation under conditions of abundant glutamine. Catalyzes the ATP-dependent biosynthesis of glutamine from glutamate and ammonia. The sequence is that of Glutamine synthetase from Escherichia coli O157:H7.